The chain runs to 493 residues: Lysine--tRNA ligase (493 aa).

Residues Glu-402 and Glu-409 each contribute to the Mg(2+) site.

Belongs to the class-II aminoacyl-tRNA synthetase family. In terms of assembly, homodimer. The cofactor is Mg(2+).

The protein resides in the cytoplasm. It catalyses the reaction tRNA(Lys) + L-lysine + ATP = L-lysyl-tRNA(Lys) + AMP + diphosphate. The polypeptide is Lysine--tRNA ligase (Fusobacterium nucleatum subsp. nucleatum (strain ATCC 25586 / DSM 15643 / BCRC 10681 / CIP 101130 / JCM 8532 / KCTC 2640 / LMG 13131 / VPI 4355)).